The primary structure comprises 285 residues: Heme oxygenase 3, chloroplastic (285 aa).

The N-terminal 58 residues, 1–58 (MATTRLNPSCHFPASTRLSCESYLGLRTTGRISYARTLTAPRGYLAVKANGGQASVVT), are a transit peptide targeting the chloroplast. Heme b is bound at residue His89. Residues 89–105 (HTKDQAREGEKESRSPE) are compositionally biased toward basic and acidic residues. The interval 89–109 (HTKDQAREGEKESRSPEEGPV) is disordered.

The protein belongs to the heme oxygenase family. In terms of tissue distribution, widely expressed at low levels.

The protein resides in the plastid. It localises to the chloroplast. It catalyses the reaction heme b + 3 reduced [NADPH--hemoprotein reductase] + 3 O2 = biliverdin IXalpha + CO + Fe(2+) + 3 oxidized [NADPH--hemoprotein reductase] + 3 H2O + H(+). In terms of biological role, catalyzes the opening of the heme ring to form the open-chain tetrapyrrole biliverdin IX with the release of iron and carbon monoxide (CO). Produces specifically the biliverdin IX-alpha isomer. Plays a minor role in phytochrome assembly and photomorphogenesis. This is Heme oxygenase 3, chloroplastic (HO3) from Arabidopsis thaliana (Mouse-ear cress).